Consider the following 207-residue polypeptide: Ribosomal RNA large subunit methyltransferase E (207 aa).

The S-adenosyl-L-methionine site is built by G60, W62, D80, D96, and D121. The active-site Proton acceptor is K161.

This sequence belongs to the class I-like SAM-binding methyltransferase superfamily. RNA methyltransferase RlmE family.

The protein resides in the cytoplasm. It catalyses the reaction uridine(2552) in 23S rRNA + S-adenosyl-L-methionine = 2'-O-methyluridine(2552) in 23S rRNA + S-adenosyl-L-homocysteine + H(+). Its function is as follows. Specifically methylates the uridine in position 2552 of 23S rRNA at the 2'-O position of the ribose in the fully assembled 50S ribosomal subunit. In Pseudomonas paraeruginosa (strain DSM 24068 / PA7) (Pseudomonas aeruginosa (strain PA7)), this protein is Ribosomal RNA large subunit methyltransferase E.